A 480-amino-acid polypeptide reads, in one-letter code: 11S globulin subunit beta (480 aa).

An N-terminal signal peptide occupies residues 1 to 21 (MARSSLFTFLCLAVFINGCLS). Pyrrolidone carboxylic acid is present on Gln-22. 2 disulfides stabilise this stretch: Cys-48–Cys-81 and Cys-124–Cys-303. Cupin type-1 domains lie at 51 to 251 (ENLR…GLVR) and 309 to 458 (QNIG…EEAQ). Mg(2+) contacts are provided by Lys-408 and Arg-468.

The protein belongs to the 11S seed storage protein (globulins) family. As to quaternary structure, hexamer; each subunit is composed of an acidic and a basic chain derived from a single precursor and linked by a disulfide bond.

In terms of biological role, this is a seed storage protein. This chain is 11S globulin subunit beta, found in Cucurbita maxima (Pumpkin).